Reading from the N-terminus, the 157-residue chain is Large ribosomal subunit protein uL13m (157 aa).

A mitochondrion-targeting transit peptide spans 1–29 (MSTLNGQTALAYAKVWHHVSAKNVPLGRL).

It belongs to the universal ribosomal protein uL13 family. Component of the mitochondrial large ribosomal subunit (mt-LSU). Mature yeast 74S mitochondrial ribosomes consist of a small (37S) and a large (54S) subunit. The 37S small subunit contains a 15S ribosomal RNA (15S mt-rRNA) and at least 32 different proteins. The 54S large subunit contains a 21S rRNA (21S mt-rRNA) and at least 45 different proteins.

It localises to the mitochondrion. In terms of biological role, component of the mitochondrial ribosome (mitoribosome), a dedicated translation machinery responsible for the synthesis of mitochondrial genome-encoded proteins, including at least some of the essential transmembrane subunits of the mitochondrial respiratory chain. The mitoribosomes are attached to the mitochondrial inner membrane and translation products are cotranslationally integrated into the membrane. This is Large ribosomal subunit protein uL13m from Schizosaccharomyces pombe (strain 972 / ATCC 24843) (Fission yeast).